Here is a 586-residue protein sequence, read N- to C-terminus: Transcription elongation regulator 1-like protein (586 aa).

A disordered region spans residues 1 to 30 (MQAGARFQRRRRQLQQQQPRRRQPLLWPMD). Over residues 7 to 23 (FQRRRRQLQQQQPRRRQ) the composition is skewed to basic residues. The region spanning 148–181 (TPIGKSWIDKRIPNCKIFFNNSFALDSTWIHPEE) is the WW 1 domain. Disordered stretches follow at residues 281–344 (TSPV…PGSP) and 378–448 (DLNR…QILL). Residues 306-317 (KSRDGDKEDKEP) are compositionally biased toward basic and acidic residues. In terms of domain architecture, WW 2 spans 339–372 (PVPGSPWCVVWTGDDRVFFFNPTMHLSVWEKPMD). 3 stretches are compositionally biased toward basic and acidic residues: residues 378-387 (DLNRIIEDPP), 411-421 (DQDVKTKRNRT), and 428-439 (KPEEAKREDKGT). FF domains follow at residues 450-503 (LEER…FVKT) and 515-570 (KLLL…FILI).

This chain is Transcription elongation regulator 1-like protein (TCERG1L), found in Homo sapiens (Human).